A 504-amino-acid chain; its full sequence is Glycerol kinase (504 aa).

T12 contacts ADP. ATP is bound by residues T12, T13, and S14. Position 12 (T12) interacts with sn-glycerol 3-phosphate. ADP is bound at residue R16. Residues R82, E83, Y134, and D246 each contribute to the sn-glycerol 3-phosphate site. Glycerol-binding residues include R82, E83, Y134, D246, and Q247. ADP-binding residues include T268 and G312. T268, G312, Q316, and G413 together coordinate ATP. G413 and N417 together coordinate ADP.

It belongs to the FGGY kinase family.

It carries out the reaction glycerol + ATP = sn-glycerol 3-phosphate + ADP + H(+). It functions in the pathway polyol metabolism; glycerol degradation via glycerol kinase pathway; sn-glycerol 3-phosphate from glycerol: step 1/1. With respect to regulation, inhibited by fructose 1,6-bisphosphate (FBP). Functionally, key enzyme in the regulation of glycerol uptake and metabolism. Catalyzes the phosphorylation of glycerol to yield sn-glycerol 3-phosphate. The polypeptide is Glycerol kinase (Renibacterium salmoninarum (strain ATCC 33209 / DSM 20767 / JCM 11484 / NBRC 15589 / NCIMB 2235)).